The chain runs to 333 residues: DNA-directed RNA polymerase subunit alpha (333 aa).

An alpha N-terminal domain (alpha-NTD) region spans residues 1–234; the sequence is MQSSVNEFLT…QQLAAFVDLK (234 aa). The segment at 248 to 333 is alpha C-terminal domain (alpha-CTD); it reads IDPILLRPVD…SLKKDDKATA (86 aa).

The protein belongs to the RNA polymerase alpha chain family. Homodimer. The RNAP catalytic core consists of 2 alpha, 1 beta, 1 beta' and 1 omega subunit. When a sigma factor is associated with the core the holoenzyme is formed, which can initiate transcription.

It carries out the reaction RNA(n) + a ribonucleoside 5'-triphosphate = RNA(n+1) + diphosphate. DNA-dependent RNA polymerase catalyzes the transcription of DNA into RNA using the four ribonucleoside triphosphates as substrates. The sequence is that of DNA-directed RNA polymerase subunit alpha from Pseudomonas aeruginosa (strain UCBPP-PA14).